We begin with the raw amino-acid sequence, 70 residues long: DNA gyrase inhibitor YacG (70 aa).

The span at 1–15 (MPEDKKAAAKVEPLR) shows a compositional bias: basic and acidic residues. The segment at 1–22 (MPEDKKAAAKVEPLRKTRPCPE) is disordered. Positions 20, 23, 35, and 39 each coordinate Zn(2+).

The protein belongs to the DNA gyrase inhibitor YacG family. Interacts with GyrB. It depends on Zn(2+) as a cofactor.

Functionally, inhibits all the catalytic activities of DNA gyrase by preventing its interaction with DNA. Acts by binding directly to the C-terminal domain of GyrB, which probably disrupts DNA binding by the gyrase. This Rhizobium johnstonii (strain DSM 114642 / LMG 32736 / 3841) (Rhizobium leguminosarum bv. viciae) protein is DNA gyrase inhibitor YacG.